The sequence spans 252 residues: Cysteine-rich repeat secretory protein 38 (252 aa).

The signal sequence occupies residues 1 to 27; the sequence is MSSLKRIVWFPILAIAIQILSIHTVLS. 2 consecutive Gnk2-homologous domains span residues 34–136 and 142–248; these read FLFH…STNF and FENR…IYPF.

This sequence belongs to the cysteine-rich repeat secretory protein family.

The protein localises to the secreted. This is Cysteine-rich repeat secretory protein 38 (CRRSP38) from Arabidopsis thaliana (Mouse-ear cress).